We begin with the raw amino-acid sequence, 187 residues long: Pyridoxal 5'-phosphate synthase subunit PdxT (187 aa).

An L-glutamine-binding site is contributed by 47-49 (GES). The active-site Nucleophile is cysteine 76. Residues arginine 102 and 128–129 (IR) contribute to the L-glutamine site. Catalysis depends on charge relay system residues histidine 165 and glutamate 167.

Belongs to the glutaminase PdxT/SNO family. In terms of assembly, in the presence of PdxS, forms a dodecamer of heterodimers. Only shows activity in the heterodimer.

The catalysed reaction is aldehydo-D-ribose 5-phosphate + D-glyceraldehyde 3-phosphate + L-glutamine = pyridoxal 5'-phosphate + L-glutamate + phosphate + 3 H2O + H(+). It carries out the reaction L-glutamine + H2O = L-glutamate + NH4(+). It participates in cofactor biosynthesis; pyridoxal 5'-phosphate biosynthesis. In terms of biological role, catalyzes the hydrolysis of glutamine to glutamate and ammonia as part of the biosynthesis of pyridoxal 5'-phosphate. The resulting ammonia molecule is channeled to the active site of PdxS. This chain is Pyridoxal 5'-phosphate synthase subunit PdxT, found in Methanococcus maripaludis (strain DSM 14266 / JCM 13030 / NBRC 101832 / S2 / LL).